The sequence spans 564 residues: Efflux pump hmp6 (564 aa).

Over residues M1–P25 the composition is skewed to basic and acidic residues. The disordered stretch occupies residues M1 to D46. 8 helical membrane passes run L58–I78, V96–Y118, I125–P145, I156–V176, G186–F206, W214–F234, F259–G279, and I289–F309. 2 N-linked (GlcNAc...) asparagine glycosylation sites follow: N312 and N322. 4 helical membrane passes run I330–F350, S361–V383, A395–S415, and I452–A472.

Belongs to the major facilitator superfamily. TCR/Tet family.

The protein resides in the cell membrane. In terms of biological role, efflux pump that might be required for efficient secretion of hypothemycin or other secondary metabolies produced by the hypothemycin gene cluster. This chain is Efflux pump hmp6, found in Hypomyces subiculosus (Nectria subiculosa).